Here is a 690-residue protein sequence, read N- to C-terminus: Protein arginine N-methyltransferase 7 (690 aa).

2 consecutive SAM-dependent MTase PRMT-type domains span residues 14–357 and 366–690; these read QNSW…YSLW and TKSV…QKKL.

Belongs to the class I-like SAM-binding methyltransferase superfamily. Protein arginine N-methyltransferase family. PRMT7 subfamily. In terms of tissue distribution, expressed at low level in ovary.

Essential arginine methyltransferase that can both catalyze the formation of omega-N monomethylarginine (MMA) and symmetrical dimethylarginine (sDMA). Specifically mediates the symmetrical dimethylation of arginine residues in the small nuclear ribonucleoproteins SmD1 and SmD3. The chain is Protein arginine N-methyltransferase 7 (Art7) from Drosophila melanogaster (Fruit fly).